A 336-amino-acid chain; its full sequence is Aspartate--ammonia ligase (336 aa).

It belongs to the class-II aminoacyl-tRNA synthetase family. AsnA subfamily.

The protein localises to the cytoplasm. It carries out the reaction L-aspartate + NH4(+) + ATP = L-asparagine + AMP + diphosphate + H(+). Its pathway is amino-acid biosynthesis; L-asparagine biosynthesis; L-asparagine from L-aspartate (ammonia route): step 1/1. In Lactobacillus johnsonii (strain CNCM I-12250 / La1 / NCC 533), this protein is Aspartate--ammonia ligase.